The sequence spans 42 residues: Osteocalcin (42 aa).

Positions 1–40 (YLDHGLGAPAPYVDPLEPKREVDELADQMGFQEAYRRFYG) constitute a Gla domain. The residue at position 9 (proline 9) is a 4-hydroxyproline. Ca(2+) contacts are provided by glutamate 17, glutamate 21, and aspartate 23. 2 positions are modified to 4-carboxyglutamate: glutamate 17 and glutamate 21.

It belongs to the osteocalcin/matrix Gla protein family. Post-translationally, gamma-carboxyglutamic acid residues are formed by vitamin K dependent carboxylation. These residues are essential for the binding of calcium.

It localises to the secreted. Its function is as follows. The carboxylated form is one of the main organic components of the bone matrix, which constitutes 1-2% of the total bone protein: it acts as a negative regulator of bone formation and is required to limit bone formation without impairing bone resorption or mineralization. The carboxylated form binds strongly to apatite and calcium. Functionally, the uncarboxylated form acts as a hormone secreted by osteoblasts, which regulates different cellular processes, such as energy metabolism, male fertility and brain development. Regulates of energy metabolism by acting as a hormone favoring pancreatic beta-cell proliferation, insulin secretion and sensitivity and energy expenditure. Uncarboxylated osteocalcin hormone also promotes testosterone production in the testes: acts as a ligand for G protein-coupled receptor GPRC6A at the surface of Leydig cells, initiating a signaling response that promotes the expression of enzymes required for testosterone synthesis in a CREB-dependent manner. Also acts as a regulator of brain development: osteocalcin hormone crosses the blood-brain barrier and acts as a ligand for GPR158 on neurons, initiating a signaling response that prevents neuronal apoptosis in the hippocampus, favors the synthesis of all monoamine neurotransmitters and inhibits that of gamma-aminobutyric acid (GABA). Osteocalcin also crosses the placenta during pregnancy and maternal osteocalcin is required for fetal brain development. This is Osteocalcin from Camelops hesternus (Western camel).